The primary structure comprises 132 residues: mRNA interferase toxin YafO (132 aa).

As to quaternary structure, probably forms a complex with the antitoxin YafN which inhibits the mRNA interferase activity.

Toxic component of a type II toxin-antitoxin (TA) system. A translation-dependent mRNA interferase. Overexpression causes cessation of cell growth and inhibits cell proliferation via inhibition of translation; this blockage is overcome by subsequent expression of antitoxin YafN. Overexpression causes cleavage of a number of mRNAs in a ribosome-dependent fashion. YafO binding to the 50S ribosomal subunit in the translation complex induces mRNA cleavage 3' to the region protected by the ribosome; YafO alone is not able to digest mRNA. This is mRNA interferase toxin YafO (yafO) from Escherichia coli (strain K12).